A 113-amino-acid polypeptide reads, in one-letter code: 4-cresol dehydrogenase [hydroxylating] cytochrome c subunit (113 aa).

The signal sequence occupies residues methionine 1–alanine 33. Heme c contacts are provided by cysteine 48, cysteine 51, histidine 52, and methionine 83.

As to quaternary structure, tetramer of two cytochrome subunits and two flavoprotein subunits. In terms of processing, binds 1 heme c group covalently per subunit.

It functions in the pathway aromatic compound metabolism; p-cresol degradation. This is the heme-containing component of the p-cresol methylhydroxylase. It accepts electrons from the flavoprotein subunit. The protein is 4-cresol dehydrogenase [hydroxylating] cytochrome c subunit (pchC) of Pseudomonas putida (Arthrobacter siderocapsulatus).